The primary structure comprises 747 residues: Putative ankyrin repeat protein FPV222 (747 aa).

14 ANK repeats span residues 38 to 67 (DNCT…DPNI), 103 to 132 (NYRN…LVNM), 136 to 165 (KNIT…NTNA), 169 to 198 (YGET…NVNV), 202 to 231 (DSIT…DTNA), 234 to 263 (LERF…NTNV), 294 to 323 (PCTV…NPDI), 328 to 357 (TSTY…YTDV), 361 to 393 (QQNT…SFNL), 397 to 426 (KGRT…DTNI), 430 to 460 (MSFT…DPNL), 464 to 493 (KEVS…DIKP), 495 to 524 (NECY…ELEV), and 529 to 559 (DHYV…DLNK).

The chain is Putative ankyrin repeat protein FPV222 from Vertebrata (FPV).